A 388-amino-acid polypeptide reads, in one-letter code: Beta-hexosaminidase LpqI (388 aa).

Residues 1–19 (MAFPRTLAILAAAAALVVA) form the signal peptide. C20 is lipidated: N-palmitoyl cysteine. C20 carries S-diacylglycerol cysteine lipidation. Substrate contacts are provided by residues D123, R131, R193, and 223–224 (KH). The Proton donor/acceptor role is filled by H236. The active-site Nucleophile is the D311.

Belongs to the glycosyl hydrolase 3 family.

The protein resides in the cell inner membrane. It carries out the reaction Hydrolysis of terminal non-reducing N-acetyl-D-hexosamine residues in N-acetyl-beta-D-hexosaminides.. Its pathway is cell wall biogenesis; peptidoglycan recycling. Functionally, plays a role in peptidoglycan recycling by cleaving the terminal beta-1,4-linked N-acetylglucosamine (GlcNAc) from peptidoglycan fragments. Acts as a regulator for GlcNAc-MurNAc levels by cleaving disaccharides and allowing the breakdown of MurNAc. This chain is Beta-hexosaminidase LpqI, found in Mycobacterium tuberculosis (strain ATCC 25618 / H37Rv).